The primary structure comprises 37 residues: Protein 6.3 (37 aa).

This Escherichia phage T7 (Bacteriophage T7) protein is Protein 6.3.